A 315-amino-acid polypeptide reads, in one-letter code: B3 domain-containing protein At1g05920 (315 aa).

A disordered region spans residues 24–129 (MISRDNQKKT…PQVASVPKSV (106 aa)). Composition is skewed to basic and acidic residues over residues 39–51 (VREE…EEMI), 66–83 (KEGK…DNRT), and 100–114 (FDHV…HAYL). Positions 204-306 (INTVIQNDFL…ILCFALVPPT (103 aa)) form a DNA-binding region, TF-B3.

Its subcellular location is the nucleus. This chain is B3 domain-containing protein At1g05920, found in Arabidopsis thaliana (Mouse-ear cress).